The primary structure comprises 429 residues: Glutamyl-tRNA reductase (429 aa).

Substrate-binding positions include 56-59, Ser-119, 124-126, and Gln-130; these read TCNR and EPQ. Catalysis depends on Cys-57, which acts as the Nucleophile. Residue 199-204 coordinates NADP(+); that stretch reads GAGEMI.

This sequence belongs to the glutamyl-tRNA reductase family. In terms of assembly, homodimer.

The enzyme catalyses (S)-4-amino-5-oxopentanoate + tRNA(Glu) + NADP(+) = L-glutamyl-tRNA(Glu) + NADPH + H(+). Its pathway is porphyrin-containing compound metabolism; protoporphyrin-IX biosynthesis; 5-aminolevulinate from L-glutamyl-tRNA(Glu): step 1/2. Catalyzes the NADPH-dependent reduction of glutamyl-tRNA(Glu) to glutamate 1-semialdehyde (GSA). This Herminiimonas arsenicoxydans protein is Glutamyl-tRNA reductase.